A 433-amino-acid polypeptide reads, in one-letter code: UPF0597 protein PG_0909 (433 aa).

It belongs to the UPF0597 family.

In Porphyromonas gingivalis (strain ATCC BAA-308 / W83), this protein is UPF0597 protein PG_0909.